Consider the following 210-residue polypeptide: Large ribosomal subunit protein uL3 (210 aa).

This sequence belongs to the universal ribosomal protein uL3 family. In terms of assembly, part of the 50S ribosomal subunit. Forms a cluster with proteins L14 and L19.

One of the primary rRNA binding proteins, it binds directly near the 3'-end of the 23S rRNA, where it nucleates assembly of the 50S subunit. The polypeptide is Large ribosomal subunit protein uL3 (Solibacter usitatus (strain Ellin6076)).